Reading from the N-terminus, the 309-residue chain is Golgi-associated RAB2 interactor protein 1A (309 aa).

Serine 231, serine 263, and serine 267 each carry phosphoserine.

Belongs to the GARIN family. Interacts (via N-terminus) with RAB2B (in GTP-bound form).

It is found in the golgi apparatus. Its function is as follows. RAB2B effector protein required for accurate acrosome formation and normal male fertility. In Homo sapiens (Human), this protein is Golgi-associated RAB2 interactor protein 1A.